A 284-amino-acid polypeptide reads, in one-letter code: D-tagatose-1,6-bisphosphate aldolase subunit GatY (284 aa).

Asp-82 functions as the Proton donor in the catalytic mechanism. Zn(2+)-binding residues include His-83 and His-180. Gly-181 is a binding site for dihydroxyacetone phosphate. A Zn(2+)-binding site is contributed by His-208. Dihydroxyacetone phosphate contacts are provided by residues 209 to 211 (GAS) and 230 to 233 (NVAT).

The protein belongs to the class II fructose-bisphosphate aldolase family. TagBP aldolase GatY subfamily. In terms of assembly, forms a complex with GatZ. Requires Zn(2+) as cofactor.

It carries out the reaction D-tagatofuranose 1,6-bisphosphate = D-glyceraldehyde 3-phosphate + dihydroxyacetone phosphate. Its pathway is carbohydrate metabolism; D-tagatose 6-phosphate degradation; D-glyceraldehyde 3-phosphate and glycerone phosphate from D-tagatose 6-phosphate: step 2/2. In terms of biological role, catalytic subunit of the tagatose-1,6-bisphosphate aldolase GatYZ, which catalyzes the reversible aldol condensation of dihydroxyacetone phosphate (DHAP or glycerone-phosphate) with glyceraldehyde 3-phosphate (G3P) to produce tagatose 1,6-bisphosphate (TBP). Requires GatZ subunit for full activity and stability. Is involved in the catabolism of galactitol. This Salmonella newport (strain SL254) protein is D-tagatose-1,6-bisphosphate aldolase subunit GatY.